The chain runs to 263 residues: 3-methyl-2-oxobutanoate hydroxymethyltransferase (263 aa).

2 residues coordinate Mg(2+): Asp45 and Asp84. 3-methyl-2-oxobutanoate contacts are provided by residues 45–46 (DS), Asp84, and Lys112. Glu114 lines the Mg(2+) pocket. Glu180 serves as the catalytic Proton acceptor.

Belongs to the PanB family. In terms of assembly, homodecamer; pentamer of dimers. Mg(2+) is required as a cofactor.

The protein localises to the cytoplasm. It catalyses the reaction 3-methyl-2-oxobutanoate + (6R)-5,10-methylene-5,6,7,8-tetrahydrofolate + H2O = 2-dehydropantoate + (6S)-5,6,7,8-tetrahydrofolate. It participates in cofactor biosynthesis; (R)-pantothenate biosynthesis; (R)-pantoate from 3-methyl-2-oxobutanoate: step 1/2. Catalyzes the reversible reaction in which hydroxymethyl group from 5,10-methylenetetrahydrofolate is transferred onto alpha-ketoisovalerate to form ketopantoate. This is 3-methyl-2-oxobutanoate hydroxymethyltransferase from Salmonella agona (strain SL483).